We begin with the raw amino-acid sequence, 378 residues long: Cysteine endopeptidase RepA (378 aa).

Positions methionine 1 to alanine 24 are cleaved as a signal peptide. Positions isoleucine 25–aspartate 141 are cleaved as a propeptide — activation peptide. Intrachain disulfides connect cysteine 164–cysteine 206, cysteine 198–cysteine 239, and cysteine 297–cysteine 350. Cysteine 167 is a catalytic residue. Catalysis depends on residues histidine 303 and asparagine 324.

The protein belongs to the peptidase C1 family.

The protein resides in the protein storage vacuole. Functionally, cysteine endopeptidase that digests in vitro both the acidic and basic subunits of glutelin, the major seed storage protein of rice. The polypeptide is Cysteine endopeptidase RepA (Oryza sativa subsp. japonica (Rice)).